Here is a 1361-residue protein sequence, read N- to C-terminus: DNA-directed RNA polymerase subunit beta (1361 aa).

Belongs to the RNA polymerase beta chain family. The RNAP catalytic core consists of 2 alpha, 1 beta, 1 beta' and 1 omega subunit. When a sigma factor is associated with the core the holoenzyme is formed, which can initiate transcription.

The enzyme catalyses RNA(n) + a ribonucleoside 5'-triphosphate = RNA(n+1) + diphosphate. Its function is as follows. DNA-dependent RNA polymerase catalyzes the transcription of DNA into RNA using the four ribonucleoside triphosphates as substrates. The sequence is that of DNA-directed RNA polymerase subunit beta from Cellvibrio japonicus (strain Ueda107) (Pseudomonas fluorescens subsp. cellulosa).